The sequence spans 259 residues: Hydroxyacylglutathione hydrolase (259 aa).

The Zn(2+) site is built by His56, His58, Asp60, His61, His112, Asp133, and His171.

Belongs to the metallo-beta-lactamase superfamily. Glyoxalase II family. As to quaternary structure, monomer. Requires Zn(2+) as cofactor.

It catalyses the reaction an S-(2-hydroxyacyl)glutathione + H2O = a 2-hydroxy carboxylate + glutathione + H(+). Its pathway is secondary metabolite metabolism; methylglyoxal degradation; (R)-lactate from methylglyoxal: step 2/2. Its function is as follows. Thiolesterase that catalyzes the hydrolysis of S-D-lactoyl-glutathione to form glutathione and D-lactic acid. The sequence is that of Hydroxyacylglutathione hydrolase from Pseudomonas putida (strain W619).